Consider the following 90-residue polypeptide: Small ribosomal subunit protein bS20 (90 aa).

Positions 1-25 (MANSPSAKKRAKQAEKRRSHNASLR) are disordered. Basic residues predominate over residues 7 to 20 (AKKRAKQAEKRRSH).

It belongs to the bacterial ribosomal protein bS20 family.

Binds directly to 16S ribosomal RNA. The chain is Small ribosomal subunit protein bS20 from Pseudomonas fluorescens (strain Pf0-1).